A 674-amino-acid chain; its full sequence is Glutaminase kidney isoform, mitochondrial (674 aa).

A mitochondrion-targeting transit peptide spans 1-54; that stretch reads MMRLRGSAMLRELLLRPPAAVGGVLRRTQPLGTLCRRPRGGSRPAAGLVAAARL. Positions 56-123 are disordered; that stretch reads PWWGGGGRAK…PGETDAFGNS (68 aa). Residues 58–71 show a composition bias toward gly residues; that stretch reads WGGGGRAKGPGSGG. The span at 89 to 101 shows a compositional bias: low complexity; that stretch reads PPQQQQQQQQQPG. Residues K135 and K169 each carry the N6-succinyllysine modification. S291 lines the substrate pocket. K316 bears the N6-acetyllysine mark. The interval 320-327 is highly mobile activation loop; that stretch reads GLRFNKLF. The substrate site is built by N340, E386, N393, Y419, Y471, and V489. ANK repeat units lie at residues 590–619 and 624–653; these read DSRT…VNPF and WNNT…QYTP. Residues 652 to 674 form a disordered region; the sequence is TPQGDSDDGKENQTVHKNLDGLL. Position 657 is a phosphoserine (S657). The segment covering 658–674 has biased composition (basic and acidic residues); sequence DDGKENQTVHKNLDGLL.

The protein belongs to the glutaminase family. In terms of assembly, homotetramer, dimer of dimers. Tetramer composed of 68 and 65 kDa peptides in a 1:3 ratio. Can assemble into higher oligomers (in vitro), but the physiological significance of this is not clear. Interacts with RAF1 and MAP2K2. Interacts with ATCAY; the interaction is direct and may control GLS localization, negatively regulating its activity. Post-translationally, synthesized as a 74-kDa cytosolic precursor which is proteolytically processed by the mitochondrial-processing peptidase (MPP) via a 72-kDa intermediate to yield the mature mitochondrial 68- and 65-kDa subunits. As to expression, kidney, brain, and intestine.

It localises to the mitochondrion. The protein localises to the cytoplasm. Its subcellular location is the cytosol. The protein resides in the mitochondrion matrix. The catalysed reaction is L-glutamine + H2O = L-glutamate + NH4(+). Its activity is regulated as follows. Enzyme activity is increased by phosphate, due to increased kcat and increased substrate affinity. Functionally, catalyzes the first reaction in the primary pathway for the renal catabolism of glutamine. Plays a role in maintaining acid-base homeostasis. Regulates the levels of the neurotransmitter glutamate, the main excitatory neurotransmitter in the brain. The sequence is that of Glutaminase kidney isoform, mitochondrial (Gls) from Rattus norvegicus (Rat).